Reading from the N-terminus, the 459-residue chain is WD repeat-containing protein 41 (459 aa).

WD repeat units lie at residues 40 to 79 (KAHHDIVRFLVQLDDYRFASAGDDGIVVVWNAQTGEKLLE), 82 to 128 (GHTQ…QVQR), 131 to 168 (CFQSTVKCLTVLQRLDVWLSGGNDLCVWNRKLDLLCKT), 220 to 258 (DHQDNILSLINVNDLSFVTGSHVGELIIWDALDWTMQAY), 321 to 359 (AHDSNVLHVARLPNRQLISCSEDGSVRIWELREKQQLAA), and 403 to 441 (GHSSSVEMFLYFEDHGLVTCSADHLIILWKNGERESGLR).

In terms of assembly, component of the C9orf72-SMCR8 complex, at least composed of C9orf72, SMCR8 and WDR41. The complex is formed of two protomers, each individually consisting of one molecule each of C9orf72, SMCR8 and WDR41. The protomers homodimerize via an interaction between C9orf72 (via C-terminus) and SMCR8 (via N-terminus). Within each protomer SMCR8 (via DENN domain) acts as a bridging protein between WDR41 (via C-terminus and N-terminus) and C9orf72 (via C-terminus). The C9orf72-SMCR8 complex associates with the ULK1/ATG1 kinase complex.

It localises to the cytoplasm. Its function is as follows. Non-catalytic component of the C9orf72-SMCR8 complex, a complex that has guanine nucleotide exchange factor (GEF) activity and regulates autophagy. The C9orf72-SMCR8 complex promotes the exchange of GDP to GTP, converting inactive GDP-bound RAB8A and RAB39B into their active GTP-bound form, thereby promoting autophagosome maturation. As part of the C9orf72-SMCR8 complex, stimulates RAB8A and RAB11A GTPase activity in vitro, however WDR42 is shown not be an essential complex component for this function. The C9orf72-SMCR8 complex also acts as a negative regulator of autophagy initiation by interacting with the ULK1/ATG1 kinase complex and inhibiting its protein kinase activity. The sequence is that of WD repeat-containing protein 41 from Homo sapiens (Human).